The primary structure comprises 87 residues: Small ribosomal subunit protein bS20 (87 aa).

A disordered region spans residues methionine 1–leucine 28.

The protein belongs to the bacterial ribosomal protein bS20 family.

Binds directly to 16S ribosomal RNA. The protein is Small ribosomal subunit protein bS20 of Mycobacterium marinum (strain ATCC BAA-535 / M).